The following is a 258-amino-acid chain: MSAYPKSYNPFDDDGEDEGARPAPWRDARDLPDGPDAPADRQQYLRQEVLRRAEATAASTSRSLALMYESEKVGVASSEELARQRGVLERTEKMVDKMDQDLKISQKHINSIKSVFGGLVNYFKSKPVETPPEQNGTLASQPNSRLKEAISSSKEQEAKYQASHPNLRRLDDTDPVPRGAGSAVSTDAYPKNPHLQAYHQKIDSNLDELSVGLGRLKDIALGMQTEIEEQDDILDRLTTKVDKLDVNIKSTERKVRQL.

Residues 1–41 (MSAYPKSYNPFDDDGEDEGARPAPWRDARDLPDGPDAPADR) form a disordered region. The span at 18–32 (EGARPAPWRDARDLP) shows a compositional bias: basic and acidic residues. A coiled-coil region spans residues 76–107 (ASSEELARQRGVLERTEKMVDKMDQDLKISQK). A phosphoserine mark is found at Ser77, Ser78, and Ser114. The interval 127 to 190 (PVETPPEQNG…GSAVSTDAYP (64 aa)) is disordered. Residues Thr130 and Thr137 each carry the phosphothreonine modification. The span at 132–144 (PEQNGTLASQPNS) shows a compositional bias: polar residues. Phosphoserine occurs at positions 163, 182, 185, 204, and 210. The t-SNARE coiled-coil homology domain maps to 196-258 (QAYHQKIDSN…KSTERKVRQL (63 aa)).

This sequence belongs to the SNAP-25 family. In terms of assembly, forms a SNARE complex, composed of VAMP8, SNAP29 and STX17, involved in fusion of autophagosome with lysosome. Interacts with multiple syntaxins including STX6. Interacts with EIPR1. Interacts with STX17; this interaction is increased in the absence of TMEM39A.

It is found in the cytoplasm. The protein localises to the golgi apparatus membrane. The protein resides in the cytoplasmic vesicle. Its subcellular location is the autophagosome membrane. It localises to the cell projection. It is found in the cilium membrane. SNAREs, soluble N-ethylmaleimide-sensitive factor-attachment protein receptors, are essential proteins for fusion of cellular membranes. SNAREs localized on opposing membranes assemble to form a trans-SNARE complex, an extended, parallel four alpha-helical bundle that drives membrane fusion. SNAP29 is a SNARE involved in autophagy through the direct control of autophagosome membrane fusion with the lysososome membrane. Also plays a role in ciliogenesis by regulating membrane fusions. The protein is Synaptosomal-associated protein 29 of Pongo abelii (Sumatran orangutan).